Reading from the N-terminus, the 284-residue chain is GPN-loop GTPase 3 (284 aa).

13-18 (GSGKST) is a GTP binding site. Residues 72 to 74 (GPN) carry the Gly-Pro-Asn (GPN)-loop; involved in dimer interface motif. 174-177 (TKMD) is a GTP binding site. Residues 261–284 (KEPKEHEDESSSMFDEYFQEHQNE) form a disordered region.

The protein belongs to the GPN-loop GTPase family. Heterodimer with GPN1. Binds to RNA polymerase II (RNAPII). Interacts directly with subunits RPB4 and RPB7 and the CTD of RPB1.

Small GTPase required for proper localization of RNA polymerase II (RNAPII). May act at an RNAP assembly step prior to nuclear import. The sequence is that of GPN-loop GTPase 3 from Bos taurus (Bovine).